Here is a 521-residue protein sequence, read N- to C-terminus: GMC-type oxidoreductase acuG (521 aa).

FAD-binding positions include T14–V15, E34–A35, L82, N90–L93, A492, and Y503–Q504.

It belongs to the GMC oxidoreductase family. FAD is required as a cofactor.

The protein operates within secondary metabolite biosynthesis. Its function is as follows. GMC-type oxidoreductase; part of the gene cluster that mediates the biosynthesis of aculins. The pathway begins with the synthesis of 6-methylsalicylic acid by the polyketide synthase (PKS) acuA via condensation of acetate and malonate units. The 6-methylsalicylic acid decarboxylase acuB then catalyzes the decarboxylation of 6-methylsalicylic acid to yield m-cresol (also known as 3-methylphenol). These first reactions occur in the cytosol. The intermediate m-cresol is then transported into the endoplasmic reticulum where the cytochrome P450 monooxygenase acuC converts it to m-hydroxybenzyl alcohol, which is further converted to gentisyl alcohol by the cytochrome P450 monooxygenase acuD. Gentisyl alcohol is further oxidized by the oxidoreductase acuE that probably catalyzes hydroxylation of the aromatic ring. The aromatic system might then be opened by oxidation through a Baeyer-Villiger type of oxidation, which could be catalyzed by acuF, with the carboxylic acid at C-1 subsequently reduced to an aldehyde by acuG. Subsequently, a hemiacetal is formed, before the dehydrogenase acuH would reduce the double bond between C-4 and C-6. Finally, keto-enol tautomerism results in formation of aculinic acid, which exists as two diastereomers (both R/S configurations at C-1) by non-enzymatic hemiacetal formation. The carboxypeptidase acuI could be involved in the linking of aculinic acid to an aculene A moiety produced by the aculene biosynthesis cluster and which leads to the production of aculin A. AcuI may also be involved in the attachment of proline to aculinic acid to form epi-aculins A and B. This chain is GMC-type oxidoreductase acuG, found in Aspergillus aculeatus (strain ATCC 16872 / CBS 172.66 / WB 5094).